The primary structure comprises 547 residues: MTKFVFVTGGVVSSLGKGIAAASLAAILESRGLKVTLLKLDPYINVDPGTMSPFQHGEVFVTEDGAETDLDLGHYERFITAKMRKVNNFTTGQIYESVIRKERRGEYLGKTVQVIPHITNEIQDYIHRGAEGFDVALVEIGGTVGDIESLPFLEAARQLSLRAGRNAAAFVHLTLVPYLASAGELKTKPTQHSVQKLREIGISPDALLCRADRQIPDDERAKISLFSNVQEDAVISVWDADTIYKIPQMLHDQGLDRIVCEKLALSPKPADLSMWTKLVHSLENPKDSVTIGMVGKYVDLTESYKSLTEALRHAGIHTESRVNIEYLDSEEIENTGPQCLAKYDAILVPGGFGKRGVEGKIASARFARESKIPYLGICLGMQVALIEYARDVAGLTKANSTEFDADTEQPVVALINEWQNHDGKVERRDANSDLGGTMRLGAQTCAVKPGTLAAEIYGSEVTERHRHRYEANNHYLGRVEDAGLIVSARTPTESLCEIMELPRTVHPWYVGVQYHPEFKSTPRDGHPLFISFIKAALAHKHAGQAKK.

The amidoligase domain stretch occupies residues methionine 1 to leucine 265. Serine 13 contacts CTP. Serine 13 is a binding site for UTP. ATP-binding positions include serine 14 to isoleucine 19 and aspartate 71. Aspartate 71 and glutamate 139 together coordinate Mg(2+). Residues aspartate 146 to glutamate 148, lysine 186 to glutamine 191, and lysine 222 each bind CTP. Residues lysine 186–glutamine 191 and lysine 222 each bind UTP. A Glutamine amidotransferase type-1 domain is found at threonine 290–alanine 542. L-glutamine is bound at residue glycine 351. Cysteine 378 serves as the catalytic Nucleophile; for glutamine hydrolysis. Residues leucine 379–glutamine 382, glutamate 402, and arginine 468 each bind L-glutamine. Catalysis depends on residues histidine 515 and glutamate 517.

Belongs to the CTP synthase family. As to quaternary structure, homotetramer.

The enzyme catalyses UTP + L-glutamine + ATP + H2O = CTP + L-glutamate + ADP + phosphate + 2 H(+). It carries out the reaction L-glutamine + H2O = L-glutamate + NH4(+). It catalyses the reaction UTP + NH4(+) + ATP = CTP + ADP + phosphate + 2 H(+). It participates in pyrimidine metabolism; CTP biosynthesis via de novo pathway; CTP from UDP: step 2/2. With respect to regulation, allosterically activated by GTP, when glutamine is the substrate; GTP has no effect on the reaction when ammonia is the substrate. The allosteric effector GTP functions by stabilizing the protein conformation that binds the tetrahedral intermediate(s) formed during glutamine hydrolysis. Inhibited by the product CTP, via allosteric rather than competitive inhibition. Functionally, catalyzes the ATP-dependent amination of UTP to CTP with either L-glutamine or ammonia as the source of nitrogen. Regulates intracellular CTP levels through interactions with the four ribonucleotide triphosphates. This chain is CTP synthase, found in Janthinobacterium sp. (strain Marseille) (Minibacterium massiliensis).